The primary structure comprises 33 residues: Brevinin-2PTe (33 aa).

A disulfide bridge connects residues Cys-27 and Cys-33.

As to expression, expressed by the skin glands.

It localises to the secreted. Functionally, has antibacterial activity against the Gram-positive bacterium S.aureus ATCC 25923 (MIC=36 uM) and the Gram-negative bacterium E.coli ATCC 25726 (MIC=18 uM). This chain is Brevinin-2PTe, found in Pulchrana picturata (Malaysian fire frog).